A 504-amino-acid chain; its full sequence is Maturase K (504 aa).

This sequence belongs to the intron maturase 2 family. MatK subfamily.

It is found in the plastid. The protein resides in the chloroplast. In terms of biological role, usually encoded in the trnK tRNA gene intron. Probably assists in splicing its own and other chloroplast group II introns. This is Maturase K from Gossypium gossypioides (Mexican cotton).